A 380-amino-acid polypeptide reads, in one-letter code: Cytochrome b (380 aa).

4 helical membrane-spanning segments follow: residues Phe34 to Met54, Trp78 to Ile99, Trp114 to Leu134, and Phe179 to Leu199. Heme b contacts are provided by His84 and His98. His183 contacts heme b. Residue His202 coordinates a ubiquinone. A run of 4 helical transmembrane segments spans residues Tyr227–Ala247, Leu289–His309, Ile321–Gly341, and Phe348–Pro368.

It belongs to the cytochrome b family. The cytochrome bc1 complex contains 3 respiratory subunits (MT-CYB, CYC1 and UQCRFS1), 2 core proteins (UQCRC1 and UQCRC2) and probably 6 low-molecular weight proteins. Heme b is required as a cofactor.

The protein resides in the mitochondrion inner membrane. In terms of biological role, component of the ubiquinol-cytochrome c reductase complex (complex III or cytochrome b-c1 complex) that is part of the mitochondrial respiratory chain. The b-c1 complex mediates electron transfer from ubiquinol to cytochrome c. Contributes to the generation of a proton gradient across the mitochondrial membrane that is then used for ATP synthesis. This Pelophylax plancyi (Korean pond frog) protein is Cytochrome b (mt-cyb).